The sequence spans 121 residues: Large ribosomal subunit protein bL19 (121 aa).

This sequence belongs to the bacterial ribosomal protein bL19 family.

This protein is located at the 30S-50S ribosomal subunit interface and may play a role in the structure and function of the aminoacyl-tRNA binding site. This Neisseria gonorrhoeae (strain ATCC 700825 / FA 1090) protein is Large ribosomal subunit protein bL19.